The following is a 188-amino-acid chain: dCTP deaminase (188 aa).

109 to 114 contributes to the dCTP binding site; it reads KSTYAR. The active-site Proton donor/acceptor is the Glu135. DCTP contacts are provided by Gln154, Tyr168, and Gln178.

The protein belongs to the dCTP deaminase family. As to quaternary structure, homotrimer.

It catalyses the reaction dCTP + H2O + H(+) = dUTP + NH4(+). Its pathway is pyrimidine metabolism; dUMP biosynthesis; dUMP from dCTP (dUTP route): step 1/2. Catalyzes the deamination of dCTP to dUTP. This Helicobacter pylori (strain Shi470) protein is dCTP deaminase.